Reading from the N-terminus, the 931-residue chain is Probable ubiquitin-like-specific protease 2B (931 aa).

The interval Ser-204–Trp-224 is disordered. Residues Ser-215–Trp-224 show a composition bias toward acidic residues. Active-site residues include His-489, Asp-522, and Cys-577. A disordered region spans residues His-825–Lys-931. A compositionally biased stretch (polar residues) spans Ser-839 to Asp-851. The segment covering Asn-873 to Pro-904 has biased composition (basic and acidic residues).

Belongs to the peptidase C48 family.

Protease that catalyzes two essential functions in the SUMO pathway: processing of full-length SUMOs to their mature forms and deconjugation of SUMO from targeted proteins. This is Probable ubiquitin-like-specific protease 2B (ULP2B) from Arabidopsis thaliana (Mouse-ear cress).